Consider the following 291-residue polypeptide: 3-hydroxy-5-phosphonooxypentane-2,4-dione thiolase (291 aa).

K203 (schiff-base intermediate with substrate) is an active-site residue.

It belongs to the DeoC/FbaB aldolase family. Homodecamer.

It is found in the cytoplasm. It catalyses the reaction dihydroxyacetone phosphate + acetyl-CoA = 3-hydroxy-2,4-dioxopentyl phosphate + CoA. Functionally, involved in the degradation of phospho-AI-2, thereby terminating induction of the lsr operon and closing the AI-2 signaling cycle. Catalyzes the transfer of an acetyl moiety from 3-hydroxy-5-phosphonooxypentane-2,4-dione to CoA to form glycerone phosphate and acetyl-CoA. The polypeptide is 3-hydroxy-5-phosphonooxypentane-2,4-dione thiolase (Salmonella paratyphi A (strain ATCC 9150 / SARB42)).